Consider the following 116-residue polypeptide: Large ribosomal subunit protein uL18 (116 aa).

It belongs to the universal ribosomal protein uL18 family. In terms of assembly, part of the 50S ribosomal subunit; part of the 5S rRNA/L5/L18/L25 subcomplex. Contacts the 5S and 23S rRNAs.

Its function is as follows. This is one of the proteins that bind and probably mediate the attachment of the 5S RNA into the large ribosomal subunit, where it forms part of the central protuberance. The protein is Large ribosomal subunit protein uL18 of Acinetobacter baumannii (strain AB307-0294).